Here is a 506-residue protein sequence, read N- to C-terminus: PHD finger protein 10 (506 aa).

Disordered regions lie at residues 1-66 and 293-377; these read MAAV…QDFG and DPEL…SVSG. Residues 23–35 show a composition bias toward basic and acidic residues; sequence VKEDNSNDTKDPE. The span at 52–66 shows a compositional bias: polar residues; it reads GDSTPSCENSNQDFG. The interval 90 to 299 is SAY; it reads MLQEQVSEYL…DPLDPELLAL (210 aa). Residues 326–338 show a composition bias toward low complexity; that stretch reads SIDSSSMNMSESD. Residues 353–367 show a composition bias toward basic and acidic residues; the sequence is KVKEKSSTPRKEGSK. The PHD-type 1; degenerate zinc finger occupies 387–444; the sequence is ICGICLKGKDANKKGRSERLIHCSQCDNSGHPSCLDMSAELVAVIKKYPWQCMECKTC. A PHD-type 2; degenerate zinc finger spans residues 446–489; it reads ICGQPHHEEEMMFCDTCDRGYHTFCVGLGALPSGRWICDCCQKV.

Belongs to the SAYP family. As to quaternary structure, component of neural progenitors-specific chromatin remodeling complex (npBAF complex), a subfamily of ATP-dependent SWI/SNF chromatin remodeling complexes.

The protein localises to the nucleus. Functionally, involved in transcription activity regulation by chromatin remodeling in the context of the neural progenitors-specific chromatin remodeling complex (npBAF complex). May play a role in the proliferation of neural progenitors. The polypeptide is PHD finger protein 10 (phf10) (Xenopus laevis (African clawed frog)).